The sequence spans 160 residues: Putative 4-hydroxy-4-methyl-2-oxoglutarate aldolase (160 aa).

Residues 76–79 (GDMI) and Arg-98 each bind substrate. Asp-99 lines the a divalent metal cation pocket.

This sequence belongs to the class II aldolase/RraA-like family. As to quaternary structure, homotrimer. A divalent metal cation is required as a cofactor.

It catalyses the reaction 4-hydroxy-4-methyl-2-oxoglutarate = 2 pyruvate. The enzyme catalyses oxaloacetate + H(+) = pyruvate + CO2. Catalyzes the aldol cleavage of 4-hydroxy-4-methyl-2-oxoglutarate (HMG) into 2 molecules of pyruvate. Also contains a secondary oxaloacetate (OAA) decarboxylase activity due to the common pyruvate enolate transition state formed following C-C bond cleavage in the retro-aldol and decarboxylation reactions. The protein is Putative 4-hydroxy-4-methyl-2-oxoglutarate aldolase of Alcanivorax borkumensis (strain ATCC 700651 / DSM 11573 / NCIMB 13689 / SK2).